A 427-amino-acid polypeptide reads, in one-letter code: Probable WRKY transcription factor 35 (427 aa).

Disordered stretches follow at residues 1-45 (MDNF…DLHV) and 266-336 (YTSE…HPPF). Pro residues predominate over residues 23-40 (SPGPPEGPSPSSMSPPPT). Residues 209–275 (SGEVVPSDLW…YTSEHNHPWP (67 aa)) constitute a DNA-binding region (WRKY). A compositionally biased stretch (low complexity) spans 284-310 (STRSSSSSSLNPSSKSSTAAATTSPSS). Polar residues predominate over residues 311 to 333 (RVFQNNSSKDEPNNSNLPSSSTH).

The protein belongs to the WRKY group II-e family.

The protein localises to the nucleus. In terms of biological role, transcription factor. Interacts specifically with the W box (5'-(T)TGAC[CT]-3'), a frequently occurring elicitor-responsive cis-acting element. The protein is Probable WRKY transcription factor 35 (WRKY35) of Arabidopsis thaliana (Mouse-ear cress).